The following is a 361-amino-acid chain: Chorismate synthase (361 aa).

2 residues coordinate NADP(+): arginine 48 and arginine 54. Residues arginine 125–serine 127, asparagine 238–alanine 239, glycine 278, lysine 293–serine 297, and arginine 319 each bind FMN.

Belongs to the chorismate synthase family. In terms of assembly, homotetramer. FMNH2 is required as a cofactor.

It carries out the reaction 5-O-(1-carboxyvinyl)-3-phosphoshikimate = chorismate + phosphate. Its pathway is metabolic intermediate biosynthesis; chorismate biosynthesis; chorismate from D-erythrose 4-phosphate and phosphoenolpyruvate: step 7/7. Its function is as follows. Catalyzes the anti-1,4-elimination of the C-3 phosphate and the C-6 proR hydrogen from 5-enolpyruvylshikimate-3-phosphate (EPSP) to yield chorismate, which is the branch point compound that serves as the starting substrate for the three terminal pathways of aromatic amino acid biosynthesis. This reaction introduces a second double bond into the aromatic ring system. In Escherichia coli (strain SE11), this protein is Chorismate synthase.